The chain runs to 715 residues: Serrate RNA effector molecule homolog (715 aa).

Disordered stretches follow at residues 1-87 (MDSD…YSGP), 223-259 (ENKD…TDKA), and 629-715 (EPKH…DDIP). Composition is skewed to basic and acidic residues over residues 7–25 (GDRR…DSYR), 37–57 (YDNK…SRGD), and 223–242 (ENKD…VKEE). Positions 243–256 (PNEEQEEGAIDDET) are enriched in acidic residues. Residues 629-659 (EPKHMPHMSRDDHRGGGGDRGYGRERDDDRG) show a composition bias toward basic and acidic residues.

It belongs to the ARS2 family.

The protein localises to the nucleus. In terms of biological role, acts as a mediator between the cap-binding complex (CBC) and the primary microRNAs (miRNAs) processing machinery. Contributes to the stability and delivery of capped primary miRNA transcripts to the primary miRNA processing complex, thereby playing a role in RNA-mediated gene silencing (RNAi) by miRNAs. This is Serrate RNA effector molecule homolog from Caenorhabditis briggsae.